The primary structure comprises 251 residues: Glucosamine-6-phosphate deaminase (251 aa).

Aspartate 67 functions as the Proton acceptor; for enolization step in the catalytic mechanism. Asparagine 136 acts as the For ring-opening step in catalysis. The active-site Proton acceptor; for ring-opening step is the histidine 138. Glutamate 143 functions as the For ring-opening step in the catalytic mechanism.

This sequence belongs to the glucosamine/galactosamine-6-phosphate isomerase family. NagB subfamily.

It carries out the reaction alpha-D-glucosamine 6-phosphate + H2O = beta-D-fructose 6-phosphate + NH4(+). The protein operates within amino-sugar metabolism; N-acetylneuraminate degradation; D-fructose 6-phosphate from N-acetylneuraminate: step 5/5. Catalyzes the reversible isomerization-deamination of glucosamine 6-phosphate (GlcN6P) to form fructose 6-phosphate (Fru6P) and ammonium ion. This chain is Glucosamine-6-phosphate deaminase, found in Geobacillus sp. (strain WCH70).